The sequence spans 428 residues: Histidine--tRNA ligase (428 aa).

It belongs to the class-II aminoacyl-tRNA synthetase family. Homodimer.

It is found in the cytoplasm. The enzyme catalyses tRNA(His) + L-histidine + ATP = L-histidyl-tRNA(His) + AMP + diphosphate + H(+). This Halalkalibacterium halodurans (strain ATCC BAA-125 / DSM 18197 / FERM 7344 / JCM 9153 / C-125) (Bacillus halodurans) protein is Histidine--tRNA ligase.